A 1141-amino-acid polypeptide reads, in one-letter code: Myosin-binding protein C, fast-type (1141 aa).

Residues 1 to 62 (MPEAKPAAKK…VFLKKPDSVS (62 aa)) are disordered. The span at 13–39 (KGKDAPKGAPKEAPPKEAPAEAPKEAP) shows a compositional bias: basic and acidic residues. 5 Ig-like C2-type domains span residues 50-153 (PTGV…NIDV), 255-344 (SAAF…VKEP), 345-437 (PVLI…VEEK), 438-538 (QLEV…KQEP), and 539-638 (PKIH…VVDV). 2 consecutive Fibronectin type-III domains span residues 641-737 (PPEA…IAPT) and 739-834 (EPLH…IREI). One can recognise an Ig-like C2-type 6 domain in the interval 838 to 932 (PKIRLPRHLR…ATIRIRVVEK (95 aa)). The 96-residue stretch at 935–1030 (PPINVMVKEV…SKNTARILKT (96 aa)) folds into the Fibronectin type-III 3 domain. The 94-residue stretch at 1048–1141 (PKFLTPLIDR…ECKLEVRVPQ (94 aa)) folds into the Ig-like C2-type 7 domain.

Belongs to the immunoglobulin superfamily. MyBP family.

Functionally, thick filament-associated protein located in the crossbridge region of vertebrate striated muscle a bands. In vitro it binds MHC, F-actin and native thin filaments, and modifies the activity of actin-activated myosin ATPase. It may modulate muscle contraction or may play a more structural role. The protein is Myosin-binding protein C, fast-type (MYBPC2) of Homo sapiens (Human).